A 69-amino-acid chain; its full sequence is uncharacterized protein (69 aa).

The first 16 residues, 1-16 (MSLGLIFALLLTHAAA), serve as a signal peptide directing secretion.

This is an uncharacterized protein from Archaeoglobus fulgidus (strain ATCC 49558 / DSM 4304 / JCM 9628 / NBRC 100126 / VC-16).